Consider the following 1220-residue polypeptide: DNA-directed RNA polymerase subunit beta' (1220 aa).

Zn(2+) is bound by residues Cys-61, Cys-63, Cys-76, and Cys-79. Mg(2+)-binding residues include Asp-450, Asp-452, and Asp-454. The tract at residues 1197-1220 (QPEVEQEPTPDIPKLDDVAKSFEE) is disordered. Residues 1209 to 1220 (PKLDDVAKSFEE) show a composition bias toward basic and acidic residues.

This sequence belongs to the RNA polymerase beta' chain family. As to quaternary structure, the RNAP catalytic core consists of 2 alpha, 1 beta, 1 beta' and 1 omega subunit. When a sigma factor is associated with the core the holoenzyme is formed, which can initiate transcription. The cofactor is Mg(2+). It depends on Zn(2+) as a cofactor.

It carries out the reaction RNA(n) + a ribonucleoside 5'-triphosphate = RNA(n+1) + diphosphate. DNA-dependent RNA polymerase catalyzes the transcription of DNA into RNA using the four ribonucleoside triphosphates as substrates. The protein is DNA-directed RNA polymerase subunit beta' of Leuconostoc citreum (strain KM20).